Reading from the N-terminus, the 329-residue chain is Phosphate acyltransferase (329 aa).

The protein belongs to the PlsX family. Homodimer. Probably interacts with PlsY.

Its subcellular location is the cytoplasm. The enzyme catalyses a fatty acyl-[ACP] + phosphate = an acyl phosphate + holo-[ACP]. It functions in the pathway lipid metabolism; phospholipid metabolism. In terms of biological role, catalyzes the reversible formation of acyl-phosphate (acyl-PO(4)) from acyl-[acyl-carrier-protein] (acyl-ACP). This enzyme utilizes acyl-ACP as fatty acyl donor, but not acyl-CoA. The polypeptide is Phosphate acyltransferase (Shouchella clausii (strain KSM-K16) (Alkalihalobacillus clausii)).